The following is a 150-amino-acid chain: D-aminoacyl-tRNA deacylase (150 aa).

The short motif at 137–138 (GP) is the Gly-cisPro motif, important for rejection of L-amino acids element.

It belongs to the DTD family. Homodimer.

The protein resides in the cytoplasm. The enzyme catalyses glycyl-tRNA(Ala) + H2O = tRNA(Ala) + glycine + H(+). The catalysed reaction is a D-aminoacyl-tRNA + H2O = a tRNA + a D-alpha-amino acid + H(+). An aminoacyl-tRNA editing enzyme that deacylates mischarged D-aminoacyl-tRNAs. Also deacylates mischarged glycyl-tRNA(Ala), protecting cells against glycine mischarging by AlaRS. Acts via tRNA-based rather than protein-based catalysis; rejects L-amino acids rather than detecting D-amino acids in the active site. By recycling D-aminoacyl-tRNA to D-amino acids and free tRNA molecules, this enzyme counteracts the toxicity associated with the formation of D-aminoacyl-tRNA entities in vivo and helps enforce protein L-homochirality. The chain is D-aminoacyl-tRNA deacylase from Heliobacterium modesticaldum (strain ATCC 51547 / Ice1).